The following is a 406-amino-acid chain: LIM/homeobox protein Lhx1 (406 aa).

LIM zinc-binding domains follow at residues 4–54 (CAGC…CKND) and 63–117 (CAGC…CKED). A compositionally biased stretch (polar residues) spans 125–136 (AKENSLHSATTG). Disordered stretches follow at residues 125 to 187 (AKEN…RTTI) and 296 to 372 (FPQG…SAEV). Residues 137-148 (SDPSLSPDSQDP) are compositionally biased toward low complexity. Residues 151–167 (DDAKDSESANVSDKETG) are compositionally biased toward basic and acidic residues. A DNA-binding region (homeobox) is located at residues 180–239 (RRGPRTTIKAKQLETLKAAFAATPKPTRHIREQLAQETGLNMRVIQVWFQNRRSKERRMK).

The protein localises to the nucleus. In terms of biological role, transcriptional factor that defines subclasses of motoneurons that segregate into columns in the spinal cord and select distinct axon pathways. Acts in conjunction with ISL-2. This chain is LIM/homeobox protein Lhx1 (LHX1), found in Gallus gallus (Chicken).